The chain runs to 117 residues: NADH-ubiquinone oxidoreductase chain 3 (117 aa).

3 consecutive transmembrane segments (helical) span residues 1-21 (MLML…VMML), 58-78 (FLIA…LPMI), and 86-106 (LMNW…GLYH).

The protein belongs to the complex I subunit 3 family.

It is found in the mitochondrion membrane. The enzyme catalyses a ubiquinone + NADH + 5 H(+)(in) = a ubiquinol + NAD(+) + 4 H(+)(out). Its function is as follows. Core subunit of the mitochondrial membrane respiratory chain NADH dehydrogenase (Complex I) that is believed to belong to the minimal assembly required for catalysis. Complex I functions in the transfer of electrons from NADH to the respiratory chain. The immediate electron acceptor for the enzyme is believed to be ubiquinone. This is NADH-ubiquinone oxidoreductase chain 3 (mt:ND3) from Anopheles gambiae (African malaria mosquito).